We begin with the raw amino-acid sequence, 230 residues long: uncharacterized protein (230 aa).

This is an uncharacterized protein from Mycobacterium tuberculosis (strain ATCC 25618 / H37Rv).